Consider the following 254-residue polypeptide: Leucyl/phenylalanyl-tRNA--protein transferase (254 aa).

The protein belongs to the L/F-transferase family.

It is found in the cytoplasm. It carries out the reaction N-terminal L-lysyl-[protein] + L-leucyl-tRNA(Leu) = N-terminal L-leucyl-L-lysyl-[protein] + tRNA(Leu) + H(+). It catalyses the reaction N-terminal L-arginyl-[protein] + L-leucyl-tRNA(Leu) = N-terminal L-leucyl-L-arginyl-[protein] + tRNA(Leu) + H(+). The catalysed reaction is L-phenylalanyl-tRNA(Phe) + an N-terminal L-alpha-aminoacyl-[protein] = an N-terminal L-phenylalanyl-L-alpha-aminoacyl-[protein] + tRNA(Phe). Its function is as follows. Functions in the N-end rule pathway of protein degradation where it conjugates Leu, Phe and, less efficiently, Met from aminoacyl-tRNAs to the N-termini of proteins containing an N-terminal arginine or lysine. In Burkholderia lata (strain ATCC 17760 / DSM 23089 / LMG 22485 / NCIMB 9086 / R18194 / 383), this protein is Leucyl/phenylalanyl-tRNA--protein transferase.